The primary structure comprises 783 residues: Cation/H(+) antiporter 2 (783 aa).

12 helical membrane passes run 19 to 39, 43 to 63, 81 to 101, 121 to 141, 145 to 165, 186 to 206, 208 to 228, 242 to 262, 300 to 320, 323 to 343, 355 to 375, and 391 to 411; these read LNTM…FYLL, CGQA…PVLL, YYSF…GLEV, FVVS…LFGI, YFTF…PVVV, ALFI…FISG, IILE…INMV, YLSK…GITI, EFVL…IALT, FYLG…IGVI, YWLF…LLLD, and MMVA…SFLL.

It belongs to the monovalent cation:proton antiporter 2 (CPA2) transporter (TC 2.A.37) family. CHX (TC 2.A.37.4) subfamily. Specifically expressed in pollen.

The protein resides in the membrane. Its function is as follows. May operate as a cation/H(+) antiporter. The sequence is that of Cation/H(+) antiporter 2 (CHX2) from Arabidopsis thaliana (Mouse-ear cress).